A 259-amino-acid polypeptide reads, in one-letter code: Dihydroorotate dehydrogenase B (NAD(+)), electron transfer subunit (259 aa).

In terms of domain architecture, FAD-binding FR-type spans 2–102; the sequence is MQKQNMIVVN…LGPLGHGFPV (101 aa). Residues 53-56, 70-72, and 77-78 contribute to the FAD site; these read RPIS, LYR, and GT. 4 residues coordinate [2Fe-2S] cluster: cysteine 221, cysteine 226, cysteine 229, and cysteine 246.

This sequence belongs to the PyrK family. Heterotetramer of 2 PyrK and 2 PyrD type B subunits. Requires [2Fe-2S] cluster as cofactor. FAD is required as a cofactor.

It participates in pyrimidine metabolism; UMP biosynthesis via de novo pathway; orotate from (S)-dihydroorotate (NAD(+) route): step 1/1. In terms of biological role, responsible for channeling the electrons from the oxidation of dihydroorotate from the FMN redox center in the PyrD type B subunit to the ultimate electron acceptor NAD(+). In Bacillus cereus (strain ATCC 14579 / DSM 31 / CCUG 7414 / JCM 2152 / NBRC 15305 / NCIMB 9373 / NCTC 2599 / NRRL B-3711), this protein is Dihydroorotate dehydrogenase B (NAD(+)), electron transfer subunit.